A 392-amino-acid chain; its full sequence is Galactokinase (392 aa).

37–40 (EHTD) is a substrate binding site. Residues Ser71 and 128–134 (GAGLSSS) contribute to the ATP site. Mg(2+)-binding residues include Ser134 and Glu166. The Proton acceptor role is filled by Asp178. Tyr228 lines the substrate pocket.

Belongs to the GHMP kinase family. GalK subfamily.

The protein localises to the cytoplasm. It carries out the reaction alpha-D-galactose + ATP = alpha-D-galactose 1-phosphate + ADP + H(+). It functions in the pathway carbohydrate metabolism; galactose metabolism. In terms of biological role, catalyzes the transfer of the gamma-phosphate of ATP to D-galactose to form alpha-D-galactose-1-phosphate (Gal-1-P). The polypeptide is Galactokinase (Streptococcus pneumoniae serotype 4 (strain ATCC BAA-334 / TIGR4)).